Here is a 166-residue protein sequence, read N- to C-terminus: Endoribonuclease YbeY (166 aa).

Residues histidine 132, histidine 136, and histidine 142 each coordinate Zn(2+).

Belongs to the endoribonuclease YbeY family. Requires Zn(2+) as cofactor.

The protein localises to the cytoplasm. Single strand-specific metallo-endoribonuclease involved in late-stage 70S ribosome quality control and in maturation of the 3' terminus of the 16S rRNA. The sequence is that of Endoribonuclease YbeY from Clostridium botulinum (strain 657 / Type Ba4).